A 70-amino-acid polypeptide reads, in one-letter code: Conotoxin AbVIB (70 aa).

An N-terminal signal peptide occupies residues 1–17; sequence VIIIAVLFLTACQLTTA. Positions 18 to 41 are excised as a propeptide; that stretch reads ETSSRGKQKHRALRSTDKNSKLTR. Positions 20–41 are disordered; sequence SSRGKQKHRALRSTDKNSKLTR. 3 disulfides stabilise this stretch: Cys43/Cys57, Cys50/Cys61, and Cys56/Cys68.

It belongs to the conotoxin O1 superfamily. As to expression, expressed by the venom duct.

It localises to the secreted. The protein is Conotoxin AbVIB of Conus abbreviatus (Abbreviated cone).